The primary structure comprises 403 residues: Sorting nexin-32 (403 aa).

A PX domain is found at 20–168 (LQGDSSLQVE…VFLEYGQDLS (149 aa)). The stretch at 258-335 (NQLRTSFLKL…KARTRNREVR (78 aa)) forms a coiled coil.

The protein belongs to the sorting nexin family.

In terms of biological role, may be involved in several stages of intracellular trafficking. In Homo sapiens (Human), this protein is Sorting nexin-32 (SNX32).